The sequence spans 102 residues: Guanyl-specific ribonuclease Pc (102 aa).

Cystine bridges form between Cys2–Cys10 and Cys6–Cys101. His38 is an active-site residue. Residue Glu56 is the Proton acceptor of the active site. His90 functions as the Proton donor in the catalytic mechanism.

It belongs to the ribonuclease N1/T1 family.

It catalyses the reaction [RNA] containing guanosine + H2O = an [RNA fragment]-3'-guanosine-3'-phosphate + a 5'-hydroxy-ribonucleotide-3'-[RNA fragment].. This Penicillium chrysogenum (Penicillium notatum) protein is Guanyl-specific ribonuclease Pc.